The following is a 661-amino-acid chain: UvrABC system protein C (661 aa).

Residues 25-104 form the GIY-YIG domain; the sequence is AEPGCYLMRD…IKNHQPHFNV (80 aa). A UVR domain is found at 214-249; that stretch reads DELQHLLQEQMERYAERMDYESAARVRDQLQGLDQL. Over residues 636–652 the composition is skewed to basic and acidic residues; that stretch reads FFHPSDEGTDADARAAL. Residues 636-661 form a disordered region; that stretch reads FFHPSDEGTDADARAALEEQPQELSA.

The protein belongs to the UvrC family. As to quaternary structure, interacts with UvrB in an incision complex.

Its subcellular location is the cytoplasm. Its function is as follows. The UvrABC repair system catalyzes the recognition and processing of DNA lesions. UvrC both incises the 5' and 3' sides of the lesion. The N-terminal half is responsible for the 3' incision and the C-terminal half is responsible for the 5' incision. The sequence is that of UvrABC system protein C from Synechococcus sp. (strain CC9605).